Here is a 179-residue protein sequence, read N- to C-terminus: Large ribosomal subunit protein uL6 (179 aa).

Belongs to the universal ribosomal protein uL6 family. Part of the 50S ribosomal subunit.

Its function is as follows. This protein binds to the 23S rRNA, and is important in its secondary structure. It is located near the subunit interface in the base of the L7/L12 stalk, and near the tRNA binding site of the peptidyltransferase center. The polypeptide is Large ribosomal subunit protein uL6 (Prochlorococcus marinus (strain MIT 9312)).